Here is a 1046-residue protein sequence, read N- to C-terminus: Multidrug resistance protein MexB (1046 aa).

Over 1–9 (MSKFFIDRP) the chain is Cytoplasmic. The chain crosses the membrane as a helical span at residues 10 to 28 (IFAWVIALVIMLAGGLSIL). Topologically, residues 29–339 (SLPVNQYPAI…TPVVSASIHE (311 aa)) are periplasmic. The helical transmembrane segment at 340 to 359 (VVKTLGEAILLVFLVMYLFL) threads the bilayer. Residues 360–365 (QNFRAT) lie on the Cytoplasmic side of the membrane. A helical membrane pass occupies residues 366-385 (LIPTIAVPVVLLGTFGVLAA). Over 386–391 (FGFSIN) the chain is Periplasmic. Residues 392–413 (TLTMFGMVLAIGLLVDDAIVVV) form a helical membrane-spanning segment. The Cytoplasmic segment spans residues 414–441 (ENVERVMAEEGLSPREAARKSMGQIQGA). A helical membrane pass occupies residues 442–460 (LVGIAMVLSAVFLPMAFFG). The Periplasmic segment spans residues 461 to 473 (GSTGVIYRQFSIT). The helical transmembrane segment at 474–496 (IVSAMALSVIVALILTPALCATM) threads the bilayer. Topologically, residues 497-538 (LKPIEKGDHGEHKGGFFGWFNRMFLSTTHGYERGVASILKHR) are cytoplasmic. A helical transmembrane segment spans residues 539-557 (APYLLIYVVIVAGMIWMFT). Residues 558 to 871 (RIPTAFLPDE…SYEERLSGSQ (314 aa)) lie on the Periplasmic side of the membrane. A helical transmembrane segment spans residues 872-891 (APALYALSLLVVFLCLAALY). At 892–897 (ESWSIP) the chain is on the cytoplasmic side. The helical transmembrane segment at 898–917 (FSVMLVVPLGVIGALLATSM) threads the bilayer. At 918-923 (RGLSND) the chain is on the periplasmic side. Residues 924 to 945 (VFFQVGLLTTIGLSAKNAILIV) traverse the membrane as a helical segment. The Cytoplasmic portion of the chain corresponds to 946–972 (EFAKELHEQGKGIVEAAIEACRMRLRP). The chain crosses the membrane as a helical span at residues 973–991 (IVMTSLAFILGVVPLAIST). The Periplasmic portion of the chain corresponds to 992 to 1004 (GAGSGSQHAIGTG). Residues 1005-1027 (VIGGMVTATVLAIFWVPLFYVAV) form a helical membrane-spanning segment. The Cytoplasmic segment spans residues 1028-1046 (STLFKDEASKQQASVEKGQ).

This sequence belongs to the resistance-nodulation-cell division (RND) (TC 2.A.6) family. Component of the MexAB-OprM multidrug efflux complex, composed of six MexA subunits forming a hexameric tube, binding to a MexB trimer, which interact with the trimeric OprM outer membrane channel protein. OprM is thought to not directly contact MexB; instead, MexA joins MexB and OprM by forming a funnel-like hexamer anchored to the inner membrane. MexA may initially form a hexameric ring complex with MexB prior to OprM, then OprM undergoes a conformational change as it contacts MexA, allowing the periplasmic gate to open. It is thought that, under high intracellular substrate concentration, MexB ejects substrate into the tunnel formed by MexA-OprM; as the substrate level declines, conformational changes in MexB cause efflux to reduce and stop and the complex shifts to the closed state. Acts as a substrate:proton antiporter and activity is enhanced significantly when in complex with MexA and OprM, in vitro.

The protein resides in the cell inner membrane. Export of antibiotics and solvents is dramatically decreased in the presence of the protonophore carbonyl cyanide m-chlorophenylhydrazone (CCCP), therefore may be driven by a proton gradient. Antibiotic efflux is inhibited by pyridopyrimidine derivatives, such as ABI-PP, acting by binding to a hydrophobic pocket in MexB. Its function is as follows. The inner membrane transporter component of the MexAB-OprM efflux system that confers multidrug resistance. Functions as the major efflux pump for n-hexane and p-xylene efflux. Has been shown in one study to be involved in the active efflux of the autoinducer N-(3-oxododecanoyl) homoserine lactone, thereby playing an indirect role in quorum-sensing; but has been shown in another study not to be involved in efflux of this autoinducer. Over-expression of the pump increases antibiotic and solvent efflux capacities. Implicated in the secretion of the siderophore pyoverdine. The protein is Multidrug resistance protein MexB (mexB) of Pseudomonas aeruginosa (strain ATCC 15692 / DSM 22644 / CIP 104116 / JCM 14847 / LMG 12228 / 1C / PRS 101 / PAO1).